We begin with the raw amino-acid sequence, 169 residues long: Cilia- and flagella-associated protein 276 (169 aa).

2 disordered regions span residues 26–45 (SKKL…EPWS) and 150–169 (HTAA…FFST). Residues 36 to 45 (HLAQQQEPWS) show a composition bias toward polar residues. Basic and acidic residues predominate over residues 160-169 (RKKDGGFFST).

In terms of assembly, microtubule inner protein component of sperm flagellar doublet microtubules. As to expression, expressed in cerebrum, cerebellum, gastrocnemius muscle, spinal cord and lung tissues.

The protein resides in the cytoplasm. It localises to the cytoskeleton. Its subcellular location is the flagellum axoneme. It is found in the cilium axoneme. In terms of biological role, microtubule inner protein (MIP) part of the dynein-decorated doublet microtubules (DMTs) in cilia axoneme, which is required for motile cilia beating. May play an important role for the maintenance of myelin-axon integrity. May affect intracellular Ca(2+) homeostasis. This chain is Cilia- and flagella-associated protein 276, found in Homo sapiens (Human).